The chain runs to 188 residues: UPF0398 protein OEOE_1093 (188 aa).

It belongs to the UPF0398 family.

This Oenococcus oeni (strain ATCC BAA-331 / PSU-1) protein is UPF0398 protein OEOE_1093.